The chain runs to 60 residues: Large ribosomal subunit protein uL30 (60 aa).

This sequence belongs to the universal ribosomal protein uL30 family. Part of the 50S ribosomal subunit.

In Acidothermus cellulolyticus (strain ATCC 43068 / DSM 8971 / 11B), this protein is Large ribosomal subunit protein uL30.